The primary structure comprises 212 residues: uncharacterized protein (212 aa).

The span at 87–105 shows a compositional bias: low complexity; that stretch reads NNNNNNNNNNNHNHNNSNN. Residues 87–107 are disordered; it reads NNNNNNNNNNNHNHNNSNNTA.

This is an uncharacterized protein from Saccharomyces cerevisiae (strain ATCC 204508 / S288c) (Baker's yeast).